A 435-amino-acid polypeptide reads, in one-letter code: Fez family zinc finger protein 2 (435 aa).

An Engrailed homology 1 repressor motif is present at residues 27–42 (SLAFSIERIMAKTSEP). 6 consecutive C2H2-type zinc fingers follow at residues 254–276 (FTCE…MPVH), 282–304 (FVCK…KIIH), 310–332 (HKCN…IRIH), 338–360 (FVCE…KLTH), 366–388 (YKCT…MHTH), and 394–417 (FTCG…RKLH).

Belongs to the krueppel C2H2-type zinc-finger protein family.

The protein resides in the nucleus. Its function is as follows. Transcription repressor. Component of the regulatory cascade that controls the development of dopaminergic (DA) and serotonergic (5HT) neurons. The protein is Fez family zinc finger protein 2 (fezf2) of Xenopus tropicalis (Western clawed frog).